The sequence spans 583 residues: Aspartate--tRNA ligase (583 aa).

Glutamate 174 is a binding site for L-aspartate. Residues 198-201 (QITK) form an aspartate region. Arginine 220 contacts L-aspartate. ATP is bound by residues 220-222 (RDE) and glutamine 229. Histidine 443 contributes to the L-aspartate binding site. Glutamate 477 is a binding site for ATP. An L-aspartate-binding site is contributed by arginine 484. 529-532 (GLDR) contacts ATP.

Belongs to the class-II aminoacyl-tRNA synthetase family. Type 1 subfamily. In terms of assembly, homodimer.

The protein localises to the cytoplasm. The enzyme catalyses tRNA(Asp) + L-aspartate + ATP = L-aspartyl-tRNA(Asp) + AMP + diphosphate. Functionally, catalyzes the attachment of L-aspartate to tRNA(Asp) in a two-step reaction: L-aspartate is first activated by ATP to form Asp-AMP and then transferred to the acceptor end of tRNA(Asp). This is Aspartate--tRNA ligase from Streptococcus thermophilus (strain ATCC BAA-250 / LMG 18311).